Here is a 207-residue protein sequence, read N- to C-terminus: uncharacterized protein (207 aa).

The protein belongs to the methyltransferase superfamily.

This is an uncharacterized protein from Escherichia coli (strain K12).